The following is a 345-amino-acid chain: GTPase Obg (345 aa).

In terms of domain architecture, Obg spans 1 to 158; the sequence is MFIDSVKITL…RLVRLELKLI (158 aa). Residues 159-339 enclose the OBG-type G domain; the sequence is ADVGLVGFPN…LKFMLLEEIK (181 aa). GTP is bound by residues 165–172, 190–194, 212–215, 280–283, and 320–322; these read GFPNVGKS, FTTLT, DIPG, SKSD, and SSL. The Mg(2+) site is built by serine 172 and threonine 192.

Belongs to the TRAFAC class OBG-HflX-like GTPase superfamily. OBG GTPase family. As to quaternary structure, monomer. Requires Mg(2+) as cofactor.

It is found in the cytoplasm. In terms of biological role, an essential GTPase which binds GTP, GDP and possibly (p)ppGpp with moderate affinity, with high nucleotide exchange rates and a fairly low GTP hydrolysis rate. Plays a role in control of the cell cycle, stress response, ribosome biogenesis and in those bacteria that undergo differentiation, in morphogenesis control. This Campylobacter jejuni subsp. doylei (strain ATCC BAA-1458 / RM4099 / 269.97) protein is GTPase Obg.